A 226-amino-acid polypeptide reads, in one-letter code: Elongation factor 1-delta 2 (226 aa).

The segment at Thr-82–Lys-131 is disordered. Positions Ala-97 to Glu-113 are enriched in acidic residues. Residues Glu-114–Ala-124 are compositionally biased toward basic and acidic residues.

The protein belongs to the EF-1-beta/EF-1-delta family. EF-1 is composed of 4 subunits: alpha, beta (1B-alpha=beta'), delta (1B-beta), and gamma (1B-gamma).

Its function is as follows. EF-1-beta and EF-1-beta' stimulate the exchange of GDP bound to EF-1-alpha to GTP. This chain is Elongation factor 1-delta 2, found in Oryza sativa subsp. japonica (Rice).